A 107-amino-acid polypeptide reads, in one-letter code: Replication restart protein PriB (107 aa).

In terms of domain architecture, SSB spans 1-97; the sequence is MNTLELSARV…LHLQQARRIA (97 aa).

It belongs to the PriB family. As to quaternary structure, homodimer. Interacts with PriA and DnaT. Component of the replication restart primosome. Primosome assembly occurs via a 'hand-off' mechanism. PriA binds to replication forks, subsequently PriB then DnaT bind; DnaT then displaces ssDNA to generate the helicase loading substrate.

Functionally, involved in the restart of stalled replication forks, which reloads the replicative helicase on sites other than the origin of replication; the PriA-PriB pathway is the major replication restart pathway. During primosome assembly it facilitates complex formation between PriA and DnaT on DNA; stabilizes PriA on DNA. Stimulates the DNA unwinding activity of PriA helicase. The chain is Replication restart protein PriB from Bordetella parapertussis (strain 12822 / ATCC BAA-587 / NCTC 13253).